We begin with the raw amino-acid sequence, 504 residues long: L-carnitine/gamma-butyrobetaine antiporter (504 aa).

The next 12 membrane-spanning stretches (helical) occupy residues 8 to 28 (AGIE…LCWL), 51 to 71 (WGWA…WLVF), 92 to 112 (IFMM…SIEI), 143 to 163 (GPLP…FFFV), 195 to 215 (FYLV…TPLV), 231 to 251 (LDAI…AFGL), 263 to 283 (TYLS…SFIV), 315 to 335 (AWTV…SIFL), 347 to 367 (LCLG…TYSG), 403 to 423 (LSTA…VTLI), 446 to 466 (LLVR…LLAL), and 475 to 495 (AIIA…LSFI).

This sequence belongs to the BCCT transporter (TC 2.A.15) family. CaiT subfamily. Homotrimer.

It is found in the cell inner membrane. It carries out the reaction 4-(trimethylamino)butanoate(in) + (R)-carnitine(out) = 4-(trimethylamino)butanoate(out) + (R)-carnitine(in). It functions in the pathway amine and polyamine metabolism; carnitine metabolism. Functionally, catalyzes the exchange of L-carnitine for gamma-butyrobetaine. This chain is L-carnitine/gamma-butyrobetaine antiporter, found in Proteus sp. (strain LE138).